A 415-amino-acid polypeptide reads, in one-letter code: Gamma-glutamyl phosphate reductase (415 aa).

It belongs to the gamma-glutamyl phosphate reductase family.

The protein resides in the cytoplasm. It carries out the reaction L-glutamate 5-semialdehyde + phosphate + NADP(+) = L-glutamyl 5-phosphate + NADPH + H(+). It functions in the pathway amino-acid biosynthesis; L-proline biosynthesis; L-glutamate 5-semialdehyde from L-glutamate: step 2/2. Catalyzes the NADPH-dependent reduction of L-glutamate 5-phosphate into L-glutamate 5-semialdehyde and phosphate. The product spontaneously undergoes cyclization to form 1-pyrroline-5-carboxylate. This chain is Gamma-glutamyl phosphate reductase, found in Thermotoga petrophila (strain ATCC BAA-488 / DSM 13995 / JCM 10881 / RKU-1).